The following is a 353-amino-acid chain: Histidinol-phosphate aminotransferase (353 aa).

N6-(pyridoxal phosphate)lysine is present on lysine 218.

Belongs to the class-II pyridoxal-phosphate-dependent aminotransferase family. Histidinol-phosphate aminotransferase subfamily. In terms of assembly, homodimer. It depends on pyridoxal 5'-phosphate as a cofactor.

It carries out the reaction L-histidinol phosphate + 2-oxoglutarate = 3-(imidazol-4-yl)-2-oxopropyl phosphate + L-glutamate. Its pathway is amino-acid biosynthesis; L-histidine biosynthesis; L-histidine from 5-phospho-alpha-D-ribose 1-diphosphate: step 7/9. In Synechococcus sp. (strain JA-3-3Ab) (Cyanobacteria bacterium Yellowstone A-Prime), this protein is Histidinol-phosphate aminotransferase.